The primary structure comprises 240 residues: HTH-type transcriptional regulator Mce2R (240 aa).

The HTH gntR-type domain occupies Arg9–Phe77. Positions Glu37–Lys56 form a DNA-binding region, H-T-H motif.

Its function is as follows. Negatively regulates the expression of its operon as well as expression of end (endonuclease 4). This Mycobacterium tuberculosis (strain CDC 1551 / Oshkosh) protein is HTH-type transcriptional regulator Mce2R (mce2R).